Consider the following 1068-residue polypeptide: MRSAAKPWNPAIRAGGHGPDRVRPLPAASSGMKSSKSSTSLAFESRLSRLKRASSEDTLNKPGSTAASGVVRLKKTATAGAISELTESRLRSGTGAFTTTKRTGIPAPREFSVTVSRERSVPRGPSNPRKSVSSPTSSNTPTPTKHLRTPSTKPKQENEGGEKAALESQVRELLAEAKAKDSEINRLRSELKKYKEKRTLNAEGTDALGPNVDGTSVSPGDTEPMIRALEEKNKNFQKELSDLEEENRVLKEKLIYLEHSPNSEGAASHTGDSSCPTSITQESSFGSPTGNQMSSDIDEYKKNIHGNALRTSGSSSSDVTKASLSPDASDFEHITAETPSRPLSSTSNPFKSSKCSTAGSSPNSVSELSLASLTEKIQKMEENHHSTAEELQATLQELSDQQQMVQELTAENEKLVDEKTILETSFHQHRERAEQLSQENEKLMNLLQERVKNEEPTTQEGKIIELEQKCTGILEQGRFEREKLLNIQQQLTCSLRKVEEENQGALEMIKRLKEENEKLNEFLELERHNNNMMAKTLEECRVTLEGLKMENGSLKSHLQGEKQKATEASAVEQTAESCEVQEMLKVARAEKDLLELSCNELRQELLKANGEIKHVSSLLAKVEKDYSYLKEICDHQAEQLSRTSLKLQEKASESDAEIKDMKETIFELEDQVEQHRAVKLHNNQLISELESSVIKLEEQKSDLERQLKTLTKQMKEETEEWRRFQADLQTAVVVANDIKCEAQQELRTVKRKLLEEEEKNARLQKELGDVQGHGRVVTSRAAPPPVDEEPESSEVDAAGRWPGVCVSRTSPTPPESATTVKSLIKSFDLGRPGGAGQNISVHKTPRSPLSGIPVRTAPAAAVSPMQRHSTYSSVRPASRGVTQRLDLPDLPLSDILKGRTETLKPDPHLRKSPSLESLSRPPSLGFGDTRLLSASTRAWKPQSKLSVERKDPLAALAREYGGSKRNALLKWCQKKTQGYANIDITNFSSSWSDGLAFCALLHTYLPAHIPYQELNSQEKKRNLLLAFEAAESVGIKPSLELSEMLYTDRPDWQSVMQYVAQIYKYFET.

The segment at 1 to 221 (MRSAAKPWNP…VDGTSVSPGD (221 aa)) is disordered. The N-myristoyl glycine moiety is linked to residue Arg2. Residues 29–40 (SSGMKSSKSSTS) are compositionally biased toward low complexity. Phosphoserine is present on residues Ser38 and Ser55. Position 78 is a phosphothreonine (Thr78). 5 positions are modified to phosphoserine: Ser112, Ser131, Ser134, Ser137, and Ser138. A compositionally biased stretch (low complexity) spans 126–144 (SNPRKSVSSPTSSNTPTPT). Thr142 carries the phosphothreonine modification. Residues 154-200 (PKQENEGGEKAALESQVRELLAEAKAKDSEINRLRSELKKYKEKRTL) are compositionally biased toward basic and acidic residues. Phosphoserine is present on residues Ser218 and Ser241. Composition is skewed to polar residues over residues 261-295 (PNSE…QMSS), 309-323 (LRTS…TKAS), and 337-367 (ETPS…SVSE). The segment at 261–367 (PNSEGAASHT…AGSSPNSVSE (107 aa)) is disordered. A phosphoserine mark is found at Ser361, Ser366, Ser369, and Ser425. Residues 579–773 (EVQEMLKVAR…QKELGDVQGH (195 aa)) are a coiled coil. Positions 777 to 796 (VTSRAAPPPVDEEPESSEVD) are disordered. A phosphoserine mark is found at Ser847 and Ser863. 2 disordered regions span residues 859–885 (AAAV…TQRL) and 898–922 (GRTE…SRPP). The span at 866 to 875 (QRHSTYSSVR) shows a compositional bias: polar residues. Residues 898–909 (GRTETLKPDPHL) are compositionally biased toward basic and acidic residues. Phosphoserine is present on residues Ser912 and Ser914. Over residues 912-922 (SPSLESLSRPP) the composition is skewed to low complexity. One can recognise a Calponin-homology (CH) domain in the interval 962–1067 (GSKRNALLKW…YVAQIYKYFE (106 aa)).

The protein belongs to the cytospin-A family. In terms of tissue distribution, highly expressed in testis. Barely detectable in other tissues. Also highly expressed in some cancer cell lines.

The protein resides in the nucleus. It localises to the membrane. The sequence is that of Cytospin-B (SPECC1) from Homo sapiens (Human).